The primary structure comprises 452 residues: cAMP-dependent protein kinase regulatory subunit (452 aa).

A dimerization and phosphorylation region spans residues 28-212 (QFCANYFNSK…ELSKTLGSNF (185 aa)). The interval 74-163 (IMTTNKRQPS…APPVPKSKIP (90 aa)) is disordered. The segment covering 75-84 (MTTNKRQPSF) has biased composition (polar residues). Residues 95 to 106 (SIDHHHDDDPKE) are compositionally biased toward basic and acidic residues. Phosphoserine is present on serine 173. Residues 213-330 (LFRQ…FLKD) and 333-451 (VLSS…QGSS) each bind a nucleoside 3',5'-cyclic phosphate. 3',5'-cyclic AMP contacts are provided by glutamate 278, arginine 287, glutamate 399, and arginine 408.

It belongs to the cAMP-dependent kinase regulatory chain family. Tetramer, composed of 2 regulatory (R) and 2 catalytic (C) subunits. In the presence of cAMP it dissociates into 2 active monomeric C subunits and an R dimer.

The protein is cAMP-dependent protein kinase regulatory subunit (PKAR) of Debaryomyces hansenii (strain ATCC 36239 / CBS 767 / BCRC 21394 / JCM 1990 / NBRC 0083 / IGC 2968) (Yeast).